A 224-amino-acid chain; its full sequence is Pro-thyrotropin-releasing hormone-B (224 aa).

An N-terminal signal peptide occupies residues 1-15 (MMFLWWLLLLGTAIS). Pyrrolidone carboxylic acid is present on Gln75. Position 77 is a proline amide (Pro77). Residues 86–101 (EKRQHPGKRDLEDLQL) are compositionally biased toward basic and acidic residues. 2 disordered regions span residues 86 to 131 (EKRQ…DWSR) and 150 to 212 (RQHP…NSGN). Gln89 is subject to Pyrrolidone carboxylic acid. A Proline amide modification is found at Pro91. Gln105 carries the pyrrolidone carboxylic acid modification. A Proline amide modification is found at Pro107. Residues 110–129 (RYLEDMEKRQHPGKREEGDW) are compositionally biased toward basic and acidic residues. The residue at position 119 (Gln119) is a Pyrrolidone carboxylic acid. Pro121 bears the Proline amide mark. A Pyrrolidone carboxylic acid modification is found at Gln151. Pro153 is modified (proline amide). Gln166 bears the Pyrrolidone carboxylic acid mark. Pro168 is modified (proline amide). A compositionally biased stretch (basic and acidic residues) spans 182–199 (ENSKEVGKRQHPGKRYDP). Pyrrolidone carboxylic acid is present on Gln191. Pro193 is subject to Proline amide.

This sequence belongs to the TRH family.

The protein localises to the secreted. This is Pro-thyrotropin-releasing hormone-B (trh-b) from Xenopus laevis (African clawed frog).